Reading from the N-terminus, the 139-residue chain is MNFKYIIAVSFLIASAYARSVQNDEQSLSQRDVLEEESLREIRGIGGVLLSAGKAALKGLAKVLAEKYANGKRTAEEHEVMKRLEAVMRDLDSLDHPEEASERETRGFNQDEIAKEKRILGPVLGLVGNALGGLIKKIG.

A signal peptide spans 1 to 18 (MNFKYIIAVSFLIASAYA). Residues 19–43 (RSVQNDEQSLSQRDVLEEESLREIR) constitute a propeptide that is removed on maturation. Asparagine amide is present on Asn-70. Positions 74 to 118 (TAEEHEVMKRLEAVMRDLDSLDHPEEASERETRGFNQDEIAKEKR) are excised as a propeptide. Ile-138 bears the Isoleucine amide mark.

The protein belongs to the bombinin family. In terms of tissue distribution, expressed by the skin glands.

The protein resides in the secreted. Functionally, maximin-4 shows antibacterial activity against both Gram-positive and Gram-negative bacteria. It also shows antimicrobial activity against the fungus C.albicans, but not against A.flavus nor P.uticale. It has little hemolytic activity. It does not possess a significant cytotoxicity against tumor cell lines. It does not possess a significant anti-HIV activity. Maximin-H3 shows antibacterial activity against both Gram-positive and Gram-negative bacteria. It also shows antimicrobial activity against the fungus C.albicans. Shows strong hemolytic activity. This chain is Maximins 4/H3 type 4, found in Bombina maxima (Giant fire-bellied toad).